The following is a 196-amino-acid chain: Probable molybdenum cofactor guanylyltransferase (196 aa).

GTP is bound by residues 7–9 (LAG), Lys-19, Asp-68, and Asp-93. Asp-93 contributes to the Mg(2+) binding site.

The protein belongs to the MobA family. It depends on Mg(2+) as a cofactor.

Its subcellular location is the cytoplasm. The enzyme catalyses Mo-molybdopterin + GTP + H(+) = Mo-molybdopterin guanine dinucleotide + diphosphate. Its function is as follows. Transfers a GMP moiety from GTP to Mo-molybdopterin (Mo-MPT) cofactor (Moco or molybdenum cofactor) to form Mo-molybdopterin guanine dinucleotide (Mo-MGD) cofactor. This Pyrococcus furiosus (strain ATCC 43587 / DSM 3638 / JCM 8422 / Vc1) protein is Probable molybdenum cofactor guanylyltransferase.